Consider the following 108-residue polypeptide: Transmembrane protein 265 (108 aa).

2 helical membrane passes run 34–54 (AATS…VFAI) and 78–98 (LILA…LLLW).

The protein belongs to the CD225/Dispanin family.

The protein localises to the membrane. The chain is Transmembrane protein 265 from Homo sapiens (Human).